Consider the following 618-residue polypeptide: MKQSKLLIPTLREMPSDAQVISHALMVRAGYVRQVSAGIYAYLPLANRTIEKFKTIMREEFEKIGAVEMLAPALLTADLWRESGRYETYGEDLYKLKNRDNSDFILGPTHEETFTTLVRDAVKSYKQLPLNLYQIQSKYRDEKRPRNGLLRTREFIMKDGYSFHHNYEDLDVTYEDYRQAYEAIFTRAGLDFKGIIGDGGAMGGKDSQEFMAVTPARTDLDRWVVLDKSIASMDDIPKEVLEDIKAELAAWMISGEDTIAYSTESSYAANLEMATNEYKPSSKVAAEDALAEVETPHCKTIDEVAAFLSVDETQTIKTLLFVADNEPVVALLVGNDHINTVKLKNYLAADFLEPASEEEARAFFGAGFGSLGPVNLAQGSRIVADRKVQNLTNAVAGANKDGFHVTGVNPGRDFQAEYVDIREVKEGEMSPDGHGVLQFARGIEVGHIFKLGTRYSDSMGATILDENGRTVPIVMGCYGIGVSRILSAVIEQHARLFVNKTPKGDYRYAWGINFPKELAPFDVHLITVNVKDQVAQDLTAKLEADLMAKGYDVLTDDRNERVGSKFSDSDLIGLPIRVTVGKKAAEGIVEIKIKATGDSIEVNAENLIETLEILTKEH.

It belongs to the class-II aminoacyl-tRNA synthetase family. ProS type 1 subfamily. As to quaternary structure, homodimer.

The protein localises to the cytoplasm. The catalysed reaction is tRNA(Pro) + L-proline + ATP = L-prolyl-tRNA(Pro) + AMP + diphosphate. In terms of biological role, catalyzes the attachment of proline to tRNA(Pro) in a two-step reaction: proline is first activated by ATP to form Pro-AMP and then transferred to the acceptor end of tRNA(Pro). As ProRS can inadvertently accommodate and process non-cognate amino acids such as alanine and cysteine, to avoid such errors it has two additional distinct editing activities against alanine. One activity is designated as 'pretransfer' editing and involves the tRNA(Pro)-independent hydrolysis of activated Ala-AMP. The other activity is designated 'posttransfer' editing and involves deacylation of mischarged Ala-tRNA(Pro). The misacylated Cys-tRNA(Pro) is not edited by ProRS. The protein is Proline--tRNA ligase of Streptococcus pyogenes serotype M28 (strain MGAS6180).